The chain runs to 239 residues: tRNA (guanine-N(7)-)-methyltransferase (239 aa).

S-adenosyl-L-methionine is bound by residues Glu68, Glu93, Asp120, and Asp143. Asp143 is an active-site residue. Residues Lys147, Asp180, and 217–220 (TKFE) contribute to the substrate site.

The protein belongs to the class I-like SAM-binding methyltransferase superfamily. TrmB family.

It catalyses the reaction guanosine(46) in tRNA + S-adenosyl-L-methionine = N(7)-methylguanosine(46) in tRNA + S-adenosyl-L-homocysteine. The protein operates within tRNA modification; N(7)-methylguanine-tRNA biosynthesis. Its function is as follows. Catalyzes the formation of N(7)-methylguanine at position 46 (m7G46) in tRNA. The polypeptide is tRNA (guanine-N(7)-)-methyltransferase (Vibrio cholerae serotype O1 (strain ATCC 39315 / El Tor Inaba N16961)).